A 376-amino-acid chain; its full sequence is UPF0754 membrane protein SERP1382 (376 aa).

2 helical membrane-spanning segments follow: residues 4–24 and 356–376; these read ILLV…TNMI and TLGF…AIFV.

It belongs to the UPF0754 family.

The protein localises to the cell membrane. This chain is UPF0754 membrane protein SERP1382, found in Staphylococcus epidermidis (strain ATCC 35984 / DSM 28319 / BCRC 17069 / CCUG 31568 / BM 3577 / RP62A).